Consider the following 273-residue polypeptide: WIMGHMVDDIAMVDDFLDNGANGLELDISFDSNGKAEYTYHGTPCDCFRSCTRYESFDKYMEYVREISTPGNQKFRKSLIMLIMYLKLNSLYANQLYTAGSDIADQLARHYWKDDGAARAYMVLSLPSITQTEFIRGFKNRMESQGLQKYYAKIGWDFTGNEDLDDIEATYKKLNITEHIWQSDGITNCLNRGTDRLEDAIRRRDKPGNKYINKVYLWSIDKMSSIRDALDKGVDGIMVNYADRFIDVLKESKYSSKYRLATYEDNPWETFRP.

The active site involves H5. Mg(2+)-binding residues include E25 and D27. H41 acts as the Nucleophile in catalysis. 2 disulfide bridges follow: C45–C51 and C47–C189.

Belongs to the arthropod phospholipase D family. Class II subfamily. Requires Mg(2+) as cofactor. As to expression, expressed by the venom gland.

The protein resides in the secreted. It catalyses the reaction an N-(acyl)-sphingosylphosphocholine = an N-(acyl)-sphingosyl-1,3-cyclic phosphate + choline. The enzyme catalyses an N-(acyl)-sphingosylphosphoethanolamine = an N-(acyl)-sphingosyl-1,3-cyclic phosphate + ethanolamine. It carries out the reaction a 1-acyl-sn-glycero-3-phosphocholine = a 1-acyl-sn-glycero-2,3-cyclic phosphate + choline. The catalysed reaction is a 1-acyl-sn-glycero-3-phosphoethanolamine = a 1-acyl-sn-glycero-2,3-cyclic phosphate + ethanolamine. Dermonecrotic toxins cleave the phosphodiester linkage between the phosphate and headgroup of certain phospholipids (sphingolipid and lysolipid substrates), forming an alcohol (often choline) and a cyclic phosphate. This toxin acts on sphingomyelin (SM). It may also act on ceramide phosphoethanolamine (CPE), lysophosphatidylcholine (LPC) and lysophosphatidylethanolamine (LPE), but not on lysophosphatidylserine (LPS), and lysophosphatidylglycerol (LPG). It acts by transphosphatidylation, releasing exclusively cyclic phosphate products as second products. Induces dermonecrosis, hemolysis, increased vascular permeability, edema, inflammatory response, and platelet aggregation. This is Dermonecrotic toxin SdSicTox-betaIF1 from Sicarius cf. damarensis (strain GJB-2008) (Six-eyed sand spider).